Consider the following 328-residue polypeptide: Beta-ketoacyl-[acyl-carrier-protein] synthase III (328 aa).

Catalysis depends on residues Cys122 and His255. Residues 256–260 (QANIR) form an ACP-binding region. Asn285 is a catalytic residue.

This sequence belongs to the thiolase-like superfamily. FabH family. As to quaternary structure, homodimer.

It localises to the cytoplasm. It catalyses the reaction malonyl-[ACP] + acetyl-CoA + H(+) = 3-oxobutanoyl-[ACP] + CO2 + CoA. The protein operates within lipid metabolism; fatty acid biosynthesis. Catalyzes the condensation reaction of fatty acid synthesis by the addition to an acyl acceptor of two carbons from malonyl-ACP. Catalyzes the first condensation reaction which initiates fatty acid synthesis and may therefore play a role in governing the total rate of fatty acid production. Possesses both acetoacetyl-ACP synthase and acetyl transacylase activities. Its substrate specificity determines the biosynthesis of branched-chain and/or straight-chain of fatty acids. In Herminiimonas arsenicoxydans, this protein is Beta-ketoacyl-[acyl-carrier-protein] synthase III.